The primary structure comprises 470 residues: MSATKPTTLYDKIWNDHLAHEAEDGTCLLYIDRHLVHEVTSPQAFEGLRTAGRKVHAPEKTLAVVDHNVPTTDRSKPNPDPESAEQIAALAENAREFGVTYYNEFDKRQGVVHVIGPEQGFTLPGTTIVCGDSHTSTHGAFGALAHGIGTSEVEHVLATQTLIQKKAKNMRVTVDGDLPAGVTAKDIILAIIGEIGTAGGTGYVLEYAGSAIRALSMEGRMTVCNMSIEGGARAGLIAPDEKAYAYLKGRPLAPKGEAWDAAMRYWQTLRSDEGAHFDHEIRLDAAALPPIVTWGTSPEDVISITGKVPNPADIADEAKRLSKERALAYMGLNPGTKITDIKIDRMFIGSCTNGRIEDLRAAAKVAEGKTVNANVNAIIVPGSGLVKEQAEAEGLDKIFIAAGFEWREPGCSMCLAMNPDKLAPDERCASTSNRNFEGRQGFKGRTHLVSPAMAAAAAIAGHFVDIREWR.

Residues Cys351, Cys411, and Cys414 each coordinate [4Fe-4S] cluster.

It belongs to the aconitase/IPM isomerase family. LeuC type 1 subfamily. In terms of assembly, heterodimer of LeuC and LeuD. It depends on [4Fe-4S] cluster as a cofactor.

It catalyses the reaction (2R,3S)-3-isopropylmalate = (2S)-2-isopropylmalate. The protein operates within amino-acid biosynthesis; L-leucine biosynthesis; L-leucine from 3-methyl-2-oxobutanoate: step 2/4. Its function is as follows. Catalyzes the isomerization between 2-isopropylmalate and 3-isopropylmalate, via the formation of 2-isopropylmaleate. This chain is 3-isopropylmalate dehydratase large subunit, found in Rhodopseudomonas palustris (strain BisA53).